A 50-amino-acid polypeptide reads, in one-letter code: Penaeidin-1 (50 aa).

3 cysteine pairs are disulfide-bonded: cysteine 25–cysteine 38, cysteine 27–cysteine 45, and cysteine 39–cysteine 46.

In terms of tissue distribution, higher expression in hemocytes and to a lesser extent in heart, testis, gills, intestine, lymphoid organ and hepatopancreas. Traces in eyes and subcuticular epithelium. Not present in the brain.

The protein resides in the cytoplasmic granule. Functionally, antibacterial activity against M.luteus and E.coli bacteria. Antifungal activity against N.crassa and F.oxysporum. Presents chitin-binding activity. The sequence is that of Penaeidin-1 from Penaeus vannamei (Whiteleg shrimp).